The primary structure comprises 266 residues: Phosphatidylglycerol--prolipoprotein diacylglyceryl transferase (266 aa).

The next 7 helical transmembrane spans lie at Leu-21–Ala-41, Leu-60–Tyr-80, Val-95–Trp-115, Phe-124–Met-144, Ser-176–Ile-196, Gly-203–Phe-223, and Trp-236–Leu-256. Arg-143 serves as a coordination point for a 1,2-diacyl-sn-glycero-3-phospho-(1'-sn-glycerol).

It belongs to the Lgt family.

It localises to the cell inner membrane. The enzyme catalyses L-cysteinyl-[prolipoprotein] + a 1,2-diacyl-sn-glycero-3-phospho-(1'-sn-glycerol) = an S-1,2-diacyl-sn-glyceryl-L-cysteinyl-[prolipoprotein] + sn-glycerol 1-phosphate + H(+). The protein operates within protein modification; lipoprotein biosynthesis (diacylglyceryl transfer). Its function is as follows. Catalyzes the transfer of the diacylglyceryl group from phosphatidylglycerol to the sulfhydryl group of the N-terminal cysteine of a prolipoprotein, the first step in the formation of mature lipoproteins. This is Phosphatidylglycerol--prolipoprotein diacylglyceryl transferase from Photobacterium profundum (strain SS9).